We begin with the raw amino-acid sequence, 105 residues long: Small ribosomal subunit protein eS24 (105 aa).

The disordered stretch occupies residues Leu-86 to Ala-105. A compositionally biased stretch (acidic residues) spans Ala-93–Ala-105.

Belongs to the eukaryotic ribosomal protein eS24 family.

The sequence is that of Small ribosomal subunit protein eS24 from Natronomonas pharaonis (strain ATCC 35678 / DSM 2160 / CIP 103997 / JCM 8858 / NBRC 14720 / NCIMB 2260 / Gabara) (Halobacterium pharaonis).